The sequence spans 400 residues: Elongation factor Tu (400 aa).

The tr-type G domain maps to 10–210; sequence KPHINVGTIG…ALDEYIPEPK (201 aa). The G1 stretch occupies residues 19–26; the sequence is GHVDHGKT. 19-26 contributes to the GTP binding site; sequence GHVDHGKT. Residue T26 coordinates Mg(2+). Positions 64 to 68 are G2; sequence GITIA. A G3 region spans residues 85–88; that stretch reads DCPG. GTP contacts are provided by residues 85 to 89 and 140 to 143; these read DCPGH and NKAD. Residues 140 to 143 form a G4 region; sequence NKAD. Residues 178–180 form a G5 region; that stretch reads SAL.

The protein belongs to the TRAFAC class translation factor GTPase superfamily. Classic translation factor GTPase family. EF-Tu/EF-1A subfamily. As to quaternary structure, monomer.

The protein localises to the cytoplasm. The enzyme catalyses GTP + H2O = GDP + phosphate + H(+). Functionally, GTP hydrolase that promotes the GTP-dependent binding of aminoacyl-tRNA to the A-site of ribosomes during protein biosynthesis. The polypeptide is Elongation factor Tu (Rubrobacter xylanophilus (strain DSM 9941 / JCM 11954 / NBRC 16129 / PRD-1)).